The following is a 360-amino-acid chain: Protein RecA (360 aa).

An ATP-binding site is contributed by glycine 77–threonine 84.

It belongs to the RecA family.

The protein resides in the cytoplasm. Its function is as follows. Can catalyze the hydrolysis of ATP in the presence of single-stranded DNA, the ATP-dependent uptake of single-stranded DNA by duplex DNA, and the ATP-dependent hybridization of homologous single-stranded DNAs. It interacts with LexA causing its activation and leading to its autocatalytic cleavage. The protein is Protein RecA of Chelativorans sp. (strain BNC1).